A 213-amino-acid polypeptide reads, in one-letter code: Cytidylate kinase (213 aa).

Residue 7-15 (GPAASGKGT) participates in ATP binding.

The protein belongs to the cytidylate kinase family. Type 1 subfamily.

Its subcellular location is the cytoplasm. The enzyme catalyses CMP + ATP = CDP + ADP. It catalyses the reaction dCMP + ATP = dCDP + ADP. The protein is Cytidylate kinase of Rhodospirillum rubrum (strain ATCC 11170 / ATH 1.1.1 / DSM 467 / LMG 4362 / NCIMB 8255 / S1).